The primary structure comprises 128 residues: Small ribosomal subunit protein uS9 (128 aa).

A disordered region spans residues 107 to 128 (RAVERKKPGRPKARKRFQFSKR). Basic residues predominate over residues 113–128 (KPGRPKARKRFQFSKR).

The protein belongs to the universal ribosomal protein uS9 family.

The polypeptide is Small ribosomal subunit protein uS9 (Parabacteroides distasonis (strain ATCC 8503 / DSM 20701 / CIP 104284 / JCM 5825 / NCTC 11152)).